Consider the following 540-residue polypeptide: NAD(P)H-quinone oxidoreductase subunit 2 B, chloroplastic (540 aa).

Transmembrane regions (helical) follow at residues 24 to 44 (LLLF…GLIL), 57 to 77 (IPWL…ALLF), 99 to 119 (IFQF…VEYI), 124 to 144 (MAIT…MFLC), 149 to 169 (FITI…LSGY), 183 to 203 (YLLM…WLYG), 227 to 247 (PGIS…LSPA), 325 to 345 (WHLL…LIAI), 353 to 373 (MLAY…IVGD), 384 to 404 (YMLF…LFGL), 425 to 445 (ALSL…AGFF), 448 to 468 (LYLF…IGLL), and 514 to 534 (MIVC…IIAI).

It belongs to the complex I subunit 2 family. As to quaternary structure, NDH is composed of at least 16 different subunits, 5 of which are encoded in the nucleus.

Its subcellular location is the plastid. The protein resides in the chloroplast thylakoid membrane. The catalysed reaction is a plastoquinone + NADH + (n+1) H(+)(in) = a plastoquinol + NAD(+) + n H(+)(out). It catalyses the reaction a plastoquinone + NADPH + (n+1) H(+)(in) = a plastoquinol + NADP(+) + n H(+)(out). Its function is as follows. NDH shuttles electrons from NAD(P)H:plastoquinone, via FMN and iron-sulfur (Fe-S) centers, to quinones in the photosynthetic chain and possibly in a chloroplast respiratory chain. The immediate electron acceptor for the enzyme in this species is believed to be plastoquinone. Couples the redox reaction to proton translocation, and thus conserves the redox energy in a proton gradient. This Coffea arabica (Arabian coffee) protein is NAD(P)H-quinone oxidoreductase subunit 2 B, chloroplastic.